Reading from the N-terminus, the 193-residue chain is dITP/XTP pyrophosphatase (193 aa).

7–12 contacts substrate; that stretch reads SENENK. The active-site Proton acceptor is aspartate 65. Mg(2+) is bound at residue aspartate 65. Substrate is bound by residues serine 66, 144–147, lysine 167, and 172–173; these read FGYD and HR.

This sequence belongs to the HAM1 NTPase family. As to quaternary structure, homodimer. Mg(2+) is required as a cofactor.

It carries out the reaction XTP + H2O = XMP + diphosphate + H(+). It catalyses the reaction dITP + H2O = dIMP + diphosphate + H(+). The enzyme catalyses ITP + H2O = IMP + diphosphate + H(+). Its function is as follows. Pyrophosphatase that catalyzes the hydrolysis of nucleoside triphosphates to their monophosphate derivatives, with a high preference for the non-canonical purine nucleotides XTP (xanthosine triphosphate), dITP (deoxyinosine triphosphate) and ITP. Seems to function as a house-cleaning enzyme that removes non-canonical purine nucleotides from the nucleotide pool, thus preventing their incorporation into DNA/RNA and avoiding chromosomal lesions. In Tropheryma whipplei (strain TW08/27) (Whipple's bacillus), this protein is dITP/XTP pyrophosphatase.